The chain runs to 1582 residues: Mediator of RNA polymerase II transcription subunit 12 (1582 aa).

3 disordered regions span residues 1–114, 146–189, and 1479–1512; these read MIPN…PSAL, PQGK…VQTT, and SQLS…SQAT. Over residues 83-100 the composition is skewed to polar residues; it reads AESSANPASPTPATTGDS. The span at 1479–1493 shows a compositional bias: low complexity; the sequence is SQLSASISSPAAGGS. The span at 1499–1512 shows a compositional bias: polar residues; sequence PSGTLSGGHSSQAT.

This sequence belongs to the Mediator complex subunit 12 family. In terms of assembly, component of the srb8-11 complex, which itself associates with the Mediator complex.

It is found in the nucleus. In terms of biological role, component of the srb8-11 complex. The srb8-11 complex is a regulatory module of the Mediator complex which is itself involved in regulation of basal and activated RNA polymerase II-dependent transcription. The srb8-11 complex may be involved in the transcriptional repression of a subset of genes regulated by Mediator. It may inhibit the association of the Mediator complex with RNA polymerase II to form the holoenzyme complex. The sequence is that of Mediator of RNA polymerase II transcription subunit 12 (srb8) from Emericella nidulans (strain FGSC A4 / ATCC 38163 / CBS 112.46 / NRRL 194 / M139) (Aspergillus nidulans).